A 120-amino-acid polypeptide reads, in one-letter code: Large ribosomal subunit protein bL19 (120 aa).

The protein belongs to the bacterial ribosomal protein bL19 family.

In terms of biological role, this protein is located at the 30S-50S ribosomal subunit interface and may play a role in the structure and function of the aminoacyl-tRNA binding site. This is Large ribosomal subunit protein bL19 from Acaryochloris marina (strain MBIC 11017).